The primary structure comprises 638 residues: Adhesion G-protein coupled receptor F2 (638 aa).

Positions 1 to 25 (MISARWLYCLVLLLATESCRLFCQA) are cleaved as a signal peptide. Over 26 to 386 (ASKSKENVMP…ESPVLTYITY (361 aa)) the chain is Extracellular. N-linked (GlcNAc...) asparagine glycans are attached at residues Asn-155, Asn-219, Asn-248, Asn-293, and Asn-311. The 145-residue stretch at 233–377 (PRNSLGKNFT…SILMSPNTVE (145 aa)) folds into the GAIN-B domain. 2 disulfide bridges follow: Cys-329–Cys-356 and Cys-344–Cys-358. Residues 329 to 377 (CVGWHSLESRWDRRACKMIQENSRQAICRCQPNKFFTSFSILMSPNTVE) form a GPS region. The helical transmembrane segment at 387 to 407 (IGLGISICSLIICLAIEALVW) threads the bilayer. Over 408-422 (SQVTKTEISYLRHLC) the chain is Cytoplasmic. The helical transmembrane segment at 423–443 (IANIAVTLLMADVWFIVASFL) threads the bilayer. Topologically, residues 444 to 465 (SGPIVHHNGCVTATFFVHFFYL) are extracellular. A helical transmembrane segment spans residues 466 to 486 (SVFFWMLAKALLILYGILIVF). The Cytoplasmic portion of the chain corresponds to 487-493 (HTLPKSC). The chain crosses the membrane as a helical span at residues 494–514 (LVASLFTVGYGCPLVIAVITL). Over 515 to 541 (AVTEPGKGYLRPEACWLNWDMTKALLA) the chain is Extracellular. Residues 542-562 (FVVPALAIVVVNLITVTLVII) form a helical membrane-spanning segment. Topologically, residues 563–586 (KTQRAAVGSSMFQEVRAIVRICKN) are cytoplasmic. A helical transmembrane segment spans residues 587–607 (IAILTPLLGLTWGFGIATVVA). The Extracellular segment spans residues 608–610 (GHS). Residues 611-631 (LAFHIIFSLLNALQVSPDAMI) form a helical membrane-spanning segment. Residues 632–638 (ESEWRGC) lie on the Cytoplasmic side of the membrane.

It belongs to the G-protein coupled receptor 2 family. Adhesion G-protein coupled receptor (ADGR) subfamily.

The protein localises to the membrane. Orphan receptor. The sequence is that of Adhesion G-protein coupled receptor F2 (Adgrf2) from Rattus norvegicus (Rat).